Consider the following 268-residue polypeptide: Interferon alpha/beta receptor 2 (268 aa).

Residues 1-16 form the signal peptide; it reads MGPWTLLLLHLPLVVS. At 17-223 the chain is on the extracellular side; sequence MLPAPTNVSI…TSPTAANTVP (207 aa). Fibronectin type-III domains are found at residues 18-114 and 115-217; these read LPAP…LTDT and LLGP…TSPT. 2 disulfides stabilise this stretch: Cys-65-Cys-74 and Cys-191-Cys-211. The helical transmembrane segment at 224-244 threads the bilayer; sequence VVLSVLCAFSLLVVLLCGIVV. Topologically, residues 245–268 are cytoplasmic; that stretch reads YSGRLLCMHKPLPKTLSSVPLCGG.

It belongs to the type II cytokine receptor family. In terms of assembly, heterodimer with IFNAR1; forming the receptor for type I interferon.

It is found in the cell membrane. The protein resides in the cytoplasm. In terms of biological role, together with IFNAR1, forms the heterodimeric receptor for type I interferons (including interferons alpha, beta, epsilon, omega and kappa). Type I interferon binding activates the JAK-STAT signaling cascade, resulting in transcriptional activation or repression of interferon-regulated genes that encode the effectors of the interferon response. Mechanistically, type I interferon-binding brings the IFNAR1 and IFNAR2 subunits into close proximity with one another, driving their associated Janus kinases (JAKs) (TYK2 bound to IFNAR1 and JAK1 bound to IFNAR2) to cross-phosphorylate one another. The activated kinases phosphorylate specific tyrosine residues on the intracellular domains of IFNAR1 and IFNAR2, forming docking sites for the STAT transcription factors (STAT1, STAT2 and STAT). STAT proteins are then phosphorylated by the JAKs, promoting their translocation into the nucleus to regulate expression of interferon-regulated genes. The sequence is that of Interferon alpha/beta receptor 2 from Oncorhynchus mykiss (Rainbow trout).